Here is a 167-residue protein sequence, read N- to C-terminus: MKVYIIDYHRDDPKKCTGRKLIKLNFAELTRYGKGIILDPYSKRILSILDKDIALKTGITIVDTSWNSTSKIEFEKIKGEHRRLPILFAGNPTNYGIAYKLSSIEAVIASLYILNEVEEAIKIANIIKWGHTFLELNKELLESYRNKSENEILEIEREVIEKIIGEP.

S-adenosyl-L-methionine-binding residues include Thr-17, Val-62, Leu-84, Tyr-99, and Ser-103.

The protein belongs to the TDD superfamily. TSR3 family.

It localises to the cytoplasm. The catalysed reaction is an N(1)-methylpseudouridine in rRNA + S-adenosyl-L-methionine = N(1)-methyl-N(3)-[(3S)-3-amino-3-carboxypropyl]pseudouridine in rRNA + S-methyl-5'-thioadenosine + H(+). Aminocarboxypropyltransferase that catalyzes the aminocarboxypropyl transfer on pseudouridine corresponding to position 914 in M.jannaschii 16S rRNA. It constitutes the last step in biosynthesis of the hypermodified N1-methyl-N3-(3-amino-3-carboxypropyl) pseudouridine (m1acp3-Psi). This Sulfurisphaera tokodaii (strain DSM 16993 / JCM 10545 / NBRC 100140 / 7) (Sulfolobus tokodaii) protein is 16S rRNA aminocarboxypropyltransferase.